A 266-amino-acid chain; its full sequence is Putative deoxyribonuclease tatdn3 (266 aa).

6 residues coordinate Zn(2+): His9, His11, Glu103, His143, His166, and Asp214.

Belongs to the metallo-dependent hydrolases superfamily. TatD-type hydrolase family. It depends on Mn(2+) as a cofactor. The cofactor is Ca(2+). Mg(2+) serves as cofactor. Zn(2+) is required as a cofactor.

Its subcellular location is the nucleus. Its activity is regulated as follows. The 3'-exonuclease activity is sensitive to the metal ion present in the active site, whereas the AP endodeoxyribonuclease activity is observed in a variety of divalent metal cofactors. 3'-exoxonuclease activity is suppressed in the presence of Ca(2+), Zn(2+) and Ni(2+). Its function is as follows. Exhibits 3'-exonuclease activities and apurinic/apyrimidinic (AP) endonuclease (in vitro). Show preferential AP endonuclease activity on double-stranded DNA substrates and 3'- exonuclease activity on single-stranded DNA. This Danio rerio (Zebrafish) protein is Putative deoxyribonuclease tatdn3 (tatdn3).